The primary structure comprises 155 residues: MRRRKAPVREVLGDPIYNNKVVTKFINKMMLDGKKSVSEKIIYAAFDKIEEKSGEKGIEVFEKALERVKPLVEVRSRRVGGATYQVPVEVRPARQQSLSIRWLLEATRKRNERTMIERLASELVDAANERGAAFKKKEDVHKMAEANKAFAHYRW.

It belongs to the universal ribosomal protein uS7 family. In terms of assembly, part of the 30S ribosomal subunit. Contacts proteins S9 and S11.

Its function is as follows. One of the primary rRNA binding proteins, it binds directly to 16S rRNA where it nucleates assembly of the head domain of the 30S subunit. Is located at the subunit interface close to the decoding center, probably blocks exit of the E-site tRNA. This Helicobacter hepaticus (strain ATCC 51449 / 3B1) protein is Small ribosomal subunit protein uS7.